The following is a 777-amino-acid chain: Phosphoribosylformylglycinamidine synthase subunit PurL (777 aa).

Residue His-50 is part of the active site. ATP is bound by residues Tyr-53 and Lys-92. Glu-94 contacts Mg(2+). Residues Ser-95–His-98 and Arg-117 contribute to the substrate site. His-96 serves as the catalytic Proton acceptor. Residue Asp-118 participates in Mg(2+) binding. Position 241 (Gln-241) interacts with substrate. Asp-269 serves as a coordination point for Mg(2+). Glu-313–Gln-315 contributes to the substrate binding site. Residues Asp-520 and Gly-557 each contribute to the ATP site. Mg(2+) is bound at residue Asn-558. Position 560 (Ser-560) interacts with substrate.

It belongs to the FGAMS family. As to quaternary structure, monomer. Part of the FGAM synthase complex composed of 1 PurL, 1 PurQ and 2 PurS subunits.

Its subcellular location is the cytoplasm. It catalyses the reaction N(2)-formyl-N(1)-(5-phospho-beta-D-ribosyl)glycinamide + L-glutamine + ATP + H2O = 2-formamido-N(1)-(5-O-phospho-beta-D-ribosyl)acetamidine + L-glutamate + ADP + phosphate + H(+). The protein operates within purine metabolism; IMP biosynthesis via de novo pathway; 5-amino-1-(5-phospho-D-ribosyl)imidazole from N(2)-formyl-N(1)-(5-phospho-D-ribosyl)glycinamide: step 1/2. Part of the phosphoribosylformylglycinamidine synthase complex involved in the purines biosynthetic pathway. Catalyzes the ATP-dependent conversion of formylglycinamide ribonucleotide (FGAR) and glutamine to yield formylglycinamidine ribonucleotide (FGAM) and glutamate. The FGAM synthase complex is composed of three subunits. PurQ produces an ammonia molecule by converting glutamine to glutamate. PurL transfers the ammonia molecule to FGAR to form FGAM in an ATP-dependent manner. PurS interacts with PurQ and PurL and is thought to assist in the transfer of the ammonia molecule from PurQ to PurL. This is Phosphoribosylformylglycinamidine synthase subunit PurL from Trichormus variabilis (strain ATCC 29413 / PCC 7937) (Anabaena variabilis).